Here is a 202-residue protein sequence, read N- to C-terminus: 3-isopropylmalate dehydratase small subunit (202 aa).

Belongs to the LeuD family. LeuD type 1 subfamily. In terms of assembly, heterodimer of LeuC and LeuD.

It catalyses the reaction (2R,3S)-3-isopropylmalate = (2S)-2-isopropylmalate. The protein operates within amino-acid biosynthesis; L-leucine biosynthesis; L-leucine from 3-methyl-2-oxobutanoate: step 2/4. In terms of biological role, catalyzes the isomerization between 2-isopropylmalate and 3-isopropylmalate, via the formation of 2-isopropylmaleate. The protein is 3-isopropylmalate dehydratase small subunit of Novosphingobium aromaticivorans (strain ATCC 700278 / DSM 12444 / CCUG 56034 / CIP 105152 / NBRC 16084 / F199).